The following is a 215-amino-acid chain: Probable phosphoglycerate mutase GpmB (215 aa).

Substrate is bound by residues 8–15, 21–22, Arg58, Lys60, 82–85, 104–105, and 151–152; these read RHGETQWN, QG, ELDM, RR, and GI. The active-site Tele-phosphohistidine intermediate is the His9. The active-site Proton donor/acceptor is the Glu82.

This sequence belongs to the phosphoglycerate mutase family. GpmB subfamily.

The enzyme catalyses (2R)-2-phosphoglycerate = (2R)-3-phosphoglycerate. It participates in carbohydrate degradation; glycolysis; pyruvate from D-glyceraldehyde 3-phosphate: step 3/5. The sequence is that of Probable phosphoglycerate mutase GpmB from Salmonella typhi.